Reading from the N-terminus, the 525-residue chain is GMP synthase [glutamine-hydrolyzing] (525 aa).

Residues 9–207 (KILILDFGSQ…IVDICGCDTL (199 aa)) form the Glutamine amidotransferase type-1 domain. Cys-86 functions as the Nucleophile in the catalytic mechanism. Residues His-181 and Glu-183 contribute to the active site. One can recognise a GMPS ATP-PPase domain in the interval 208 to 400 (WTPANIAQDA…LGLPYDMVYR (193 aa)). 235-241 (SGGVDSS) is a binding site for ATP.

As to quaternary structure, homodimer.

It catalyses the reaction XMP + L-glutamine + ATP + H2O = GMP + L-glutamate + AMP + diphosphate + 2 H(+). Its pathway is purine metabolism; GMP biosynthesis; GMP from XMP (L-Gln route): step 1/1. In terms of biological role, catalyzes the synthesis of GMP from XMP. The polypeptide is GMP synthase [glutamine-hydrolyzing] (Marinomonas sp. (strain MWYL1)).